The chain runs to 401 residues: Glyceraldehyde-3-phosphate dehydrogenase A, chloroplastic (401 aa).

The transit peptide at 1 to 65 (MASNMLSIAN…RSSQNGVVEA (65 aa)) directs the protein to the chloroplast. NADP(+) contacts are provided by residues 76 to 77 (RI), Asp-100, and Arg-145. D-glyceraldehyde 3-phosphate contacts are provided by residues 217–219 (SCT), Thr-248, Arg-263, 276–277 (TG), and Arg-299. Cys-218 (nucleophile) is an active-site residue. NADP(+) is bound at residue Asn-381.

Belongs to the glyceraldehyde-3-phosphate dehydrogenase family. As to quaternary structure, tetramer of either four A chains (GAPDH 2) or two A and two B chains (GAPDH 1).

It localises to the plastid. The protein resides in the chloroplast. It carries out the reaction D-glyceraldehyde 3-phosphate + phosphate + NADP(+) = (2R)-3-phospho-glyceroyl phosphate + NADPH + H(+). The protein operates within carbohydrate biosynthesis; Calvin cycle. This chain is Glyceraldehyde-3-phosphate dehydrogenase A, chloroplastic (GAPA), found in Spinacia oleracea (Spinach).